The primary structure comprises 315 residues: Probable cytochrome c oxidase subunit 2 (315 aa).

Positions 6–53 constitute an RPE1 insert domain; the sequence is RHLSKPAYREEFKGDTSPRTAAYISNRADASLGSTYKLPLEAKFWKMS. A run of 3 helical transmembrane segments spans residues 41-61, 96-116, and 133-153; these read YKLP…CFLI, LLYI…FVCI, and VLIE…IAVP. Residues His-235, Cys-270, Cys-274, and His-278 each contribute to the Cu cation site.

Belongs to the cytochrome c oxidase subunit 2 family. Requires Cu cation as cofactor. Heme serves as cofactor.

It localises to the cell membrane. It catalyses the reaction 4 Fe(II)-[cytochrome c] + O2 + 8 H(+)(in) = 4 Fe(III)-[cytochrome c] + 2 H2O + 4 H(+)(out). Its function is as follows. Subunits I and II form the functional core of the enzyme complex. Electrons originating in cytochrome c are transferred via heme a and Cu(A) to the binuclear center formed by heme a3 and Cu(B). The protein is Probable cytochrome c oxidase subunit 2 (ctaC) of Rickettsia felis (strain ATCC VR-1525 / URRWXCal2) (Rickettsia azadi).